Reading from the N-terminus, the 229-residue chain is Cytidylate kinase (229 aa).

Gly-10 to Thr-18 is an ATP binding site.

Belongs to the cytidylate kinase family. Type 1 subfamily.

It localises to the cytoplasm. It carries out the reaction CMP + ATP = CDP + ADP. The catalysed reaction is dCMP + ATP = dCDP + ADP. This chain is Cytidylate kinase, found in Bacteroides thetaiotaomicron (strain ATCC 29148 / DSM 2079 / JCM 5827 / CCUG 10774 / NCTC 10582 / VPI-5482 / E50).